A 95-amino-acid chain; its full sequence is Putative pterin-4-alpha-carbinolamine dehydratase (95 aa).

The protein belongs to the pterin-4-alpha-carbinolamine dehydratase family.

The catalysed reaction is (4aS,6R)-4a-hydroxy-L-erythro-5,6,7,8-tetrahydrobiopterin = (6R)-L-erythro-6,7-dihydrobiopterin + H2O. This is Putative pterin-4-alpha-carbinolamine dehydratase from Thermosynechococcus vestitus (strain NIES-2133 / IAM M-273 / BP-1).